Here is a 72-residue protein sequence, read N- to C-terminus: Long neurotoxin 1 (72 aa).

5 cysteine pairs are disulfide-bonded: Cys-3–Cys-21, Cys-14–Cys-42, Cys-27–Cys-31, Cys-46–Cys-57, and Cys-58–Cys-63.

Belongs to the three-finger toxin family. Long-chain subfamily. Type II alpha-neurotoxin sub-subfamily. In terms of tissue distribution, expressed by the venom gland.

Its subcellular location is the secreted. In terms of biological role, binds with high affinity to muscular (alpha-1/CHRNA1) and neuronal (alpha-7/CHRNA7) nicotinic acetylcholine receptor (nAChR) and inhibits acetylcholine from binding to the receptor, thereby impairing neuromuscular and neuronal transmission. This chain is Long neurotoxin 1, found in Naja anchietae (Anchieta's cobra).